The sequence spans 136 residues: uncharacterized protein (136 aa).

The segment at 46–136 is disordered; that stretch reads SAGRHLGGPG…LDGLEDAEKR (91 aa). The span at 99–108 shows a compositional bias: gly residues; sequence GPGDAGGAGG. Residues 123–136 are compositionally biased toward acidic residues; sequence IAELLDGLEDAEKR.

This is an uncharacterized protein from Homo sapiens (Human).